Reading from the N-terminus, the 111-residue chain is Phosphoribosyl-ATP pyrophosphatase (111 aa).

It belongs to the PRA-PH family.

The protein localises to the cytoplasm. It catalyses the reaction 1-(5-phospho-beta-D-ribosyl)-ATP + H2O = 1-(5-phospho-beta-D-ribosyl)-5'-AMP + diphosphate + H(+). The protein operates within amino-acid biosynthesis; L-histidine biosynthesis; L-histidine from 5-phospho-alpha-D-ribose 1-diphosphate: step 2/9. This is Phosphoribosyl-ATP pyrophosphatase (hisE) from Azospirillum brasilense.